The following is a 211-amino-acid chain: Protein Nef (211 aa).

The segment at 1–38 is disordered; sequence MGNAWSKSKFAGWSEVRDRMRRSSSDPQQPCAPGVGAV. A lipid anchor (N-myristoyl glycine; by host) is attached at G2. S6 is subject to Phosphoserine; by host. A compositionally biased stretch (basic and acidic residues) spans 15–24; sequence EVRDRMRRSS. The interval 67 to 70 is acidic; interacts with host PACS1 and PACS2; stabilizes the interaction of NEF/MHC-I with host AP1M1; necessary for MHC-I internalization; the sequence is KDED. The segment at 74-83 is SH3-binding; interaction with Src family tyrosine kinases; that stretch reads PVRPQVPLRP. The PxxP; stabilizes the interaction of NEF/MHC-I with host AP1M1; necessary for MHC-I internalization signature appears at 77–80; that stretch reads PQVP. The mediates dimerization, Nef-PTE1 interaction stretch occupies residues 113–129; the sequence is EILDLWIYHTQGFFPDW. Residues 153–186 form a binding to ATP6V1H region; that stretch reads VSAEEAERLGNTNEDASLLHPACNHGAEDAHGEI. The Dileucine internalization motif; necessary for CD4 internalization motif lies at 170 to 171; it reads LL. The Diacidic; necessary for CD4 internalization motif lies at 180-181; that stretch reads ED.

It belongs to the lentivirus primate group Nef protein family. Monomer; cytosolic form. Homodimer; membrane bound form. Interacts with Nef associated p21-activated kinase (PAK2); this interaction activates PAK2. Associates with the Nef-MHC-I-AP1 complex; this complex is required for MHC-I internalization. Interacts (via C-terminus) with host PI3-kinase. Interacts with host PACS1; this interaction seems to be weak. Interacts with host PACS2. Interacts with host LCK and MAPK3; these interactions inhibit the kinase activity of the latter. Interacts with host ATP6V1H; this interaction may play a role in CD4 endocytosis. Associates with the CD4-Nef-AP2 complex; this complex is required for CD4 internalization. Interacts with host AP2 subunit alpha and AP2 subunit sigma2. Interacts with TCR-zeta chain; this interaction up-regulates the Fas ligand (FasL) surface expression. Interacts with host HCK, LYN, and SRC; these interactions activate the Src family kinases. Interacts with MAP3K5; this interaction inhibits the Fas and TNFR-mediated death signals. Interacts with beta-COP and PTE1. Interacts with human RACK1; this increases Nef phosphorylation by PKC. Interacts with TP53; this interaction decreases the half-life of TP53, protecting the infected cell against p53-mediated apoptosis. Post-translationally, the virion-associated Nef proteins are cleaved by the viral protease to release the soluble C-terminal core protein. Nef is probably cleaved concomitantly with viral structural proteins on maturation of virus particles. Myristoylated. In terms of processing, phosphorylated on serine residues, probably by host PKCdelta and theta.

The protein localises to the host cell membrane. The protein resides in the virion. It is found in the secreted. Its subcellular location is the host Golgi apparatus membrane. Functionally, factor of infectivity and pathogenicity, required for optimal virus replication. Alters numerous pathways of T-lymphocyte function and down-regulates immunity surface molecules in order to evade host defense and increase viral infectivity. Alters the functionality of other immunity cells, like dendritic cells, monocytes/macrophages and NK cells. In infected CD4(+) T-lymphocytes, down-regulates the surface MHC-I, mature MHC-II, CD4, CD28, CCR5 and CXCR4 molecules. Mediates internalization and degradation of host CD4 through the interaction of with the cytoplasmic tail of CD4, the recruitment of AP-2 (clathrin adapter protein complex 2), internalization through clathrin coated pits, and subsequent transport to endosomes and lysosomes for degradation. Diverts host MHC-I molecules to the trans-Golgi network-associated endosomal compartments by an endocytic pathway to finally target them for degradation. MHC-I down-regulation may involve AP-1 (clathrin adapter protein complex 1) or possibly Src family kinase-ZAP70/Syk-PI3K cascade recruited by PACS2. In consequence infected cells are masked for immune recognition by cytotoxic T-lymphocytes. Decreasing the number of immune receptors also prevents reinfection by more HIV particles (superinfection). Down-regulates host SERINC3 and SERINC5 thereby excluding these proteins from the viral particles. Virion infectivity is drastically higher when SERINC3 or SERINC5 are excluded from the viral envelope, because these host antiviral proteins impair the membrane fusion event necessary for subsequent virion penetration. Its function is as follows. Bypasses host T-cell signaling by inducing a transcriptional program nearly identical to that of anti-CD3 cell activation. Interaction with TCR-zeta chain up-regulates the Fas ligand (FasL). Increasing surface FasL molecules and decreasing surface MHC-I molecules on infected CD4(+) cells send attacking cytotoxic CD8+ T-lymphocytes into apoptosis. In terms of biological role, plays a role in optimizing the host cell environment for viral replication without causing cell death by apoptosis. Protects the infected cells from apoptosis in order to keep them alive until the next virus generation is ready to strike. Inhibits the Fas and TNFR-mediated death signals by blocking MAP3K5/ASK1. Decreases the half-life of TP53, protecting the infected cell against p53-mediated apoptosis. Inhibits the apoptotic signals regulated by the Bcl-2 family proteins through the formation of a Nef/PI3-kinase/PAK2 complex that leads to activation of PAK2 and induces phosphorylation of host BAD. Functionally, extracellular Nef protein targets CD4(+) T-lymphocytes for apoptosis by interacting with CXCR4 surface receptors. The sequence is that of Protein Nef from Human immunodeficiency virus type 1 group O (isolate MVP5180) (HIV-1).